The chain runs to 381 residues: Complement decay-accelerating factor (381 aa).

Residues 1–34 form the signal peptide; the sequence is MTVARPSVPAALPLLGELPRLLLLVLLCLPAVWG. Sushi domains follow at residues 35–96, 96–160, 161–222, and 223–285; these read DCGL…FCNR, RSCE…FCKK, KSCP…ECRE, and IYCP…ECRG. 2 disulfide bridges follow: Cys-36/Cys-81 and Cys-65/Cys-94. A glycan (N-linked (GlcNAc...) asparagine) is linked at Asn-95. Intrachain disulfides connect Cys-98/Cys-145, Cys-129/Cys-158, Cys-163/Cys-204, Cys-190/Cys-220, Cys-225/Cys-267, and Cys-253/Cys-283. The segment at 277-354 is disordered; that stretch reads SGPPPECRGK…PNKGSGTTSG (78 aa). Residues 287–309 are compositionally biased toward polar residues; sequence SLTSKVPPTVQKPTTVNVPTTEV. The span at 310–328 shows a compositional bias: low complexity; the sequence is SPTSQKTTTKTTTPNAQAT. The GPI-anchor amidated serine moiety is linked to residue Ser-353. Positions 354-381 are cleaved as a propeptide — removed in mature form; that stretch reads GTTRLLSGHTCFTLTGLLGTLVTMGLLT.

The protein belongs to the receptors of complement activation (RCA) family. Monomer (major form) and non-disulfide-linked, covalent homodimer (minor form). Interacts with ADGRE5. As to quaternary structure, (Microbial infection) Interacts with coxsackievirus A21, coxsackieviruses B1, B3 and B5 capsid proteins. In terms of assembly, (Microbial infection) Interacts with human enterovirus 70 and D68 capsid proteins. (Microbial infection) Interacts with human echoviruses 6, 7, 11, 12, 20 and 21 capsid proteins. Post-translationally, the Ser/Thr-rich domain is heavily O-glycosylated. Expressed on the plasma membranes of all cell types that are in intimate contact with plasma complement proteins. It is also found on the surfaces of epithelial cells lining extracellular compartments, and variants of the molecule are present in body fluids and in extracellular matrix.

It is found in the cell membrane. The protein resides in the secreted. In terms of biological role, this protein recognizes C4b and C3b fragments that condense with cell-surface hydroxyl or amino groups when nascent C4b and C3b are locally generated during C4 and c3 activation. Interaction of daf with cell-associated C4b and C3b polypeptides interferes with their ability to catalyze the conversion of C2 and factor B to enzymatically active C2a and Bb and thereby prevents the formation of C4b2a and C3bBb, the amplification convertases of the complement cascade. Inhibits complement activation by destabilizing and preventing the formation of C3 and C5 convertases, which prevents complement damage. Its function is as follows. (Microbial infection) Acts as a receptor for Coxsackievirus A21, coxsackieviruses B1, B3 and B5. Functionally, (Microbial infection) Acts as a receptor for Human enterovirus 70 and D68. (Microbial infection) Acts as a receptor for Human echoviruses 6, 7, 11, 12, 20 and 21. The chain is Complement decay-accelerating factor (CD55) from Homo sapiens (Human).